The following is a 314-amino-acid chain: Lipoyl synthase (314 aa).

Residues cysteine 55, cysteine 60, cysteine 66, cysteine 81, cysteine 85, cysteine 88, and serine 292 each coordinate [4Fe-4S] cluster. The Radical SAM core domain occupies tryptophan 67–alanine 281.

Belongs to the radical SAM superfamily. Lipoyl synthase family. The cofactor is [4Fe-4S] cluster.

The protein resides in the cytoplasm. The enzyme catalyses [[Fe-S] cluster scaffold protein carrying a second [4Fe-4S](2+) cluster] + N(6)-octanoyl-L-lysyl-[protein] + 2 oxidized [2Fe-2S]-[ferredoxin] + 2 S-adenosyl-L-methionine + 4 H(+) = [[Fe-S] cluster scaffold protein] + N(6)-[(R)-dihydrolipoyl]-L-lysyl-[protein] + 4 Fe(3+) + 2 hydrogen sulfide + 2 5'-deoxyadenosine + 2 L-methionine + 2 reduced [2Fe-2S]-[ferredoxin]. Its pathway is protein modification; protein lipoylation via endogenous pathway; protein N(6)-(lipoyl)lysine from octanoyl-[acyl-carrier-protein]: step 2/2. In terms of biological role, catalyzes the radical-mediated insertion of two sulfur atoms into the C-6 and C-8 positions of the octanoyl moiety bound to the lipoyl domains of lipoate-dependent enzymes, thereby converting the octanoylated domains into lipoylated derivatives. This Mycolicibacterium smegmatis (strain ATCC 700084 / mc(2)155) (Mycobacterium smegmatis) protein is Lipoyl synthase.